Here is a 196-residue protein sequence, read N- to C-terminus: 3-isopropylmalate dehydratase small subunit (196 aa).

This sequence belongs to the LeuD family. LeuD type 1 subfamily. In terms of assembly, heterodimer of LeuC and LeuD.

The enzyme catalyses (2R,3S)-3-isopropylmalate = (2S)-2-isopropylmalate. The protein operates within amino-acid biosynthesis; L-leucine biosynthesis; L-leucine from 3-methyl-2-oxobutanoate: step 2/4. Catalyzes the isomerization between 2-isopropylmalate and 3-isopropylmalate, via the formation of 2-isopropylmaleate. In Corynebacterium aurimucosum (strain ATCC 700975 / DSM 44827 / CIP 107346 / CN-1) (Corynebacterium nigricans), this protein is 3-isopropylmalate dehydratase small subunit.